Reading from the N-terminus, the 283-residue chain is Shikimate dehydrogenase (NADP(+)) (283 aa).

Shikimate is bound by residues 22–24 (SRS) and Thr69. The active-site Proton acceptor is Lys73. Asn93 and Asp108 together coordinate shikimate. Residues 133–137 (GAGGS) and Leu222 each bind NADP(+). Tyr224 lines the shikimate pocket. Gly245 provides a ligand contact to NADP(+).

This sequence belongs to the shikimate dehydrogenase family. As to quaternary structure, homodimer.

The enzyme catalyses shikimate + NADP(+) = 3-dehydroshikimate + NADPH + H(+). The protein operates within metabolic intermediate biosynthesis; chorismate biosynthesis; chorismate from D-erythrose 4-phosphate and phosphoenolpyruvate: step 4/7. Functionally, involved in the biosynthesis of the chorismate, which leads to the biosynthesis of aromatic amino acids. Catalyzes the reversible NADPH linked reduction of 3-dehydroshikimate (DHSA) to yield shikimate (SA). This Rhodopseudomonas palustris (strain BisB5) protein is Shikimate dehydrogenase (NADP(+)).